Consider the following 274-residue polypeptide: Rhamnulose-1-phosphate aldolase (274 aa).

Glu117 is a catalytic residue. Zn(2+) contacts are provided by His141, His143, and His212.

This sequence belongs to the aldolase class II family. RhaD subfamily. As to quaternary structure, homotetramer. It depends on Zn(2+) as a cofactor.

The protein resides in the cytoplasm. It catalyses the reaction L-rhamnulose 1-phosphate = (S)-lactaldehyde + dihydroxyacetone phosphate. The protein operates within carbohydrate degradation; L-rhamnose degradation; glycerone phosphate from L-rhamnose: step 3/3. Functionally, catalyzes the reversible cleavage of L-rhamnulose-1-phosphate to dihydroxyacetone phosphate (DHAP) and L-lactaldehyde. The polypeptide is Rhamnulose-1-phosphate aldolase (Pectobacterium carotovorum subsp. carotovorum (strain PC1)).